A 141-amino-acid polypeptide reads, in one-letter code: ATP synthase epsilon chain (141 aa).

Belongs to the ATPase epsilon chain family. As to quaternary structure, F-type ATPases have 2 components, CF(1) - the catalytic core - and CF(0) - the membrane proton channel. CF(1) has five subunits: alpha(3), beta(3), gamma(1), delta(1), epsilon(1). CF(0) has three main subunits: a, b and c.

The protein localises to the cell inner membrane. In terms of biological role, produces ATP from ADP in the presence of a proton gradient across the membrane. The protein is ATP synthase epsilon chain of Bordetella petrii (strain ATCC BAA-461 / DSM 12804 / CCUG 43448).